A 310-amino-acid polypeptide reads, in one-letter code: Putative HTH-type transcriptional regulatory protein M1425_1284 (310 aa).

An HTH cro/C1-type domain is found at 125–180 (LKHKREEMGYSIGDVAKFLGVSRKAIYDYEKGDSDVSLEVAEKLIDLFGDDIIGDV). Residues 136–155 (IGDVAKFLGVSRKAIYDYEK) constitute a DNA-binding region (H-T-H motif).

The chain is Putative HTH-type transcriptional regulatory protein M1425_1284 from Saccharolobus islandicus (strain M.14.25 / Kamchatka #1) (Sulfolobus islandicus).